A 368-amino-acid polypeptide reads, in one-letter code: MSDNQVKIKKQTIDPTLTLEDVKKQLIDKGKKEGHLSHEEIAEKLQNFEMDSDQMDDFFDQLNDNDITLVNEKDSSDTDDKINPNDLSAPPGVKINDPVRMYLKEIGRVNLLSAQEEIELAKRIEQGDEIAKSRLAEANLRLVVSIAKRYVGRGMLFLDLIQEGNMGLIKAVEKFDFSKGFKFSTYATWWIRQAITRAIADQARTIRIPVHMVETINKLIRVQRQLLQDLGRDPAPEEIGEEMDLPPEKVREILKIAQEPVSLETPIGEEDDSHLGDFIEDQEAQSPSDHAAYELLKEQLEDVLDTLTDREENVLRLRFGLDDGRTRTLEEVGKVFGVTRERIRQIEAKALRKLRHPSRSKRLKDFMD.

Basic and acidic residues predominate over residues N71–N83. Residues N71 to P90 form a disordered region. The segment at L135–T205 is sigma-70 factor domain-2. Residues D159–Q162 carry the Interaction with polymerase core subunit RpoC motif. Positions E214–H290 are sigma-70 factor domain-3. The tract at residues V303–H356 is sigma-70 factor domain-4. Positions L329 to A348 form a DNA-binding region, H-T-H motif.

This sequence belongs to the sigma-70 factor family. RpoD/SigA subfamily. Interacts transiently with the RNA polymerase catalytic core.

The protein localises to the cytoplasm. In terms of biological role, sigma factors are initiation factors that promote the attachment of RNA polymerase to specific initiation sites and are then released. This sigma factor is the primary sigma factor during exponential growth. The sequence is that of RNA polymerase sigma factor SigA from Staphylococcus epidermidis (strain ATCC 35984 / DSM 28319 / BCRC 17069 / CCUG 31568 / BM 3577 / RP62A).